The chain runs to 463 residues: ATP synthase subunit beta (463 aa).

ATP is bound at residue 152–159 (GGAGVGKT).

This sequence belongs to the ATPase alpha/beta chains family. F-type ATPases have 2 components, CF(1) - the catalytic core - and CF(0) - the membrane proton channel. CF(1) has five subunits: alpha(3), beta(3), gamma(1), delta(1), epsilon(1). CF(0) has three main subunits: a(1), b(2) and c(9-12). The alpha and beta chains form an alternating ring which encloses part of the gamma chain. CF(1) is attached to CF(0) by a central stalk formed by the gamma and epsilon chains, while a peripheral stalk is formed by the delta and b chains.

The protein localises to the cell membrane. The catalysed reaction is ATP + H2O + 4 H(+)(in) = ADP + phosphate + 5 H(+)(out). Produces ATP from ADP in the presence of a proton gradient across the membrane. The catalytic sites are hosted primarily by the beta subunits. In Clostridium botulinum (strain Alaska E43 / Type E3), this protein is ATP synthase subunit beta.